A 152-amino-acid polypeptide reads, in one-letter code: 1,4-dihydroxy-2-naphthoyl-CoA hydrolase (152 aa).

Residue aspartate 20 is part of the active site.

It belongs to the 4-hydroxybenzoyl-CoA thioesterase family. DHNA-CoA hydrolase subfamily.

The enzyme catalyses 1,4-dihydroxy-2-naphthoyl-CoA + H2O = 1,4-dihydroxy-2-naphthoate + CoA + H(+). It functions in the pathway cofactor biosynthesis; phylloquinone biosynthesis. The protein operates within quinol/quinone metabolism; 1,4-dihydroxy-2-naphthoate biosynthesis; 1,4-dihydroxy-2-naphthoate from chorismate: step 7/7. Catalyzes the hydrolysis of 1,4-dihydroxy-2-naphthoyl-CoA (DHNA-CoA) to 1,4-dihydroxy-2-naphthoate (DHNA), a reaction involved in phylloquinone (vitamin K1) biosynthesis. In Parasynechococcus marenigrum (strain WH8102), this protein is 1,4-dihydroxy-2-naphthoyl-CoA hydrolase.